The chain runs to 153 residues: Putative transmembrane protein INAFM2 (153 aa).

The segment covering 1-23 (MKERDAAPAERGKPATYTGDKKA) has biased composition (basic and acidic residues). A disordered region spans residues 1–24 (MKERDAAPAERGKPATYTGDKKAK). A helical membrane pass occupies residues 36–56 (LATVFAYVLSVSLAAIVLAVY). A disordered region spans residues 66–153 (AGTSGGAAGP…EETAAAPGSR (88 aa)). Positions 79-101 (GSNATGPSGTSGAAAAGPNTTGS) are enriched in low complexity. Residues 118-131 (PAPPEPPADSPPAG) show a composition bias toward pro residues.

The protein resides in the membrane. The chain is Putative transmembrane protein INAFM2 from Homo sapiens (Human).